The sequence spans 291 residues: Beta-lactamase Toho-1 (291 aa).

Residues M1–Q29 form the signal peptide. S73 (acyl-ester intermediate) is an active-site residue. K237 to G239 is a binding site for substrate.

The protein belongs to the class-A beta-lactamase family. Monomer.

The catalysed reaction is a beta-lactam + H2O = a substituted beta-amino acid. Its function is as follows. Has strong cefotaxime-hydrolyzing activity. The sequence is that of Beta-lactamase Toho-1 (bla) from Escherichia coli.